Reading from the N-terminus, the 279-residue chain is Thymidylate synthase (279 aa).

R21 contributes to the dUMP binding site. Residue H51 participates in (6R)-5,10-methylene-5,6,7,8-tetrahydrofolate binding. Residue 126–127 (RR) coordinates dUMP. C159 functions as the Nucleophile in the catalytic mechanism. Residues 179-182 (RSAD), N190, and 220-222 (HLY) each bind dUMP. D182 serves as a coordination point for (6R)-5,10-methylene-5,6,7,8-tetrahydrofolate. A278 lines the (6R)-5,10-methylene-5,6,7,8-tetrahydrofolate pocket.

The protein belongs to the thymidylate synthase family. Bacterial-type ThyA subfamily. Homodimer.

The protein resides in the cytoplasm. The enzyme catalyses dUMP + (6R)-5,10-methylene-5,6,7,8-tetrahydrofolate = 7,8-dihydrofolate + dTMP. Its pathway is pyrimidine metabolism; dTTP biosynthesis. Functionally, catalyzes the reductive methylation of 2'-deoxyuridine-5'-monophosphate (dUMP) to 2'-deoxythymidine-5'-monophosphate (dTMP) while utilizing 5,10-methylenetetrahydrofolate (mTHF) as the methyl donor and reductant in the reaction, yielding dihydrofolate (DHF) as a by-product. This enzymatic reaction provides an intracellular de novo source of dTMP, an essential precursor for DNA biosynthesis. The polypeptide is Thymidylate synthase (Marinobacter nauticus (strain ATCC 700491 / DSM 11845 / VT8) (Marinobacter aquaeolei)).